We begin with the raw amino-acid sequence, 103 residues long: Large ribosomal subunit protein uL24 (103 aa).

It belongs to the universal ribosomal protein uL24 family. In terms of assembly, part of the 50S ribosomal subunit.

Functionally, one of two assembly initiator proteins, it binds directly to the 5'-end of the 23S rRNA, where it nucleates assembly of the 50S subunit. One of the proteins that surrounds the polypeptide exit tunnel on the outside of the subunit. In Bacillus anthracis (strain A0248), this protein is Large ribosomal subunit protein uL24.